The sequence spans 197 residues: Cell division protein SepF (197 aa).

Residues 15–89 form a disordered region; it reads EEEEVEGPEE…RMNNNSKNNS (75 aa). A compositionally biased stretch (basic and acidic residues) spans 22 to 42; that stretch reads PEERESSRSRERVQEREDYNR. Over residues 43 to 73 the composition is skewed to polar residues; the sequence is NENQATPQTFNNKQQAIKSVPQKNTLRSNTT. Residues 80-89 are compositionally biased toward low complexity; the sequence is RMNNNSKNNS.

The protein belongs to the SepF family. In terms of assembly, homodimer. Interacts with FtsZ.

Its subcellular location is the cytoplasm. Its function is as follows. Cell division protein that is part of the divisome complex and is recruited early to the Z-ring. Probably stimulates Z-ring formation, perhaps through the cross-linking of FtsZ protofilaments. Its function overlaps with FtsA. In Staphylococcus epidermidis (strain ATCC 35984 / DSM 28319 / BCRC 17069 / CCUG 31568 / BM 3577 / RP62A), this protein is Cell division protein SepF.